We begin with the raw amino-acid sequence, 272 residues long: 5'-nucleotidase SurE (272 aa).

Positions 28, 29, 59, and 115 each coordinate a divalent metal cation.

Belongs to the SurE nucleotidase family. The cofactor is a divalent metal cation.

It is found in the cytoplasm. It carries out the reaction a ribonucleoside 5'-phosphate + H2O = a ribonucleoside + phosphate. Functionally, nucleotidase that shows phosphatase activity on nucleoside 5'-monophosphates. This Chlorobium chlorochromatii (strain CaD3) protein is 5'-nucleotidase SurE.